The following is a 290-amino-acid chain: MTVLANHSFAKMNGIGNEIVIVDLRNTDSQLSAAEARAIAAPGGVPYDQLMVLQKPRMPGTTAFVRIYNNDGSEAGACGNGMRCVAKRVFGESGAQAATFETRAGLLNCWQGPSPDLYTVDMGTPKFGWQDIPLAEEFRDTRYIELQIGPIDAPVLHSPSVVSMGNPHAIFWVDDIEAYDLERLGPLLENHPIFPERANITLAHVVDRNHIRMRTWERGAGLTLACGSAACATAVAAARLKRTDRTVEMSLPGGDLTIEWRESDDHVLMTGAAVLEYEGLFDPDLFAALA.

3 residues coordinate substrate: asparagine 17, glutamine 49, and asparagine 69. Catalysis depends on cysteine 78, which acts as the Proton donor. Residues glycine 79 to asparagine 80, asparagine 166, asparagine 199, and glutamate 217 to arginine 218 each bind substrate. The active-site Proton acceptor is cysteine 226. Glycine 227–serine 228 contacts substrate.

The protein belongs to the diaminopimelate epimerase family. Homodimer.

It is found in the cytoplasm. The catalysed reaction is (2S,6S)-2,6-diaminopimelate = meso-2,6-diaminopimelate. The protein operates within amino-acid biosynthesis; L-lysine biosynthesis via DAP pathway; DL-2,6-diaminopimelate from LL-2,6-diaminopimelate: step 1/1. Its function is as follows. Catalyzes the stereoinversion of LL-2,6-diaminopimelate (L,L-DAP) to meso-diaminopimelate (meso-DAP), a precursor of L-lysine and an essential component of the bacterial peptidoglycan. The polypeptide is Diaminopimelate epimerase (Afipia carboxidovorans (strain ATCC 49405 / DSM 1227 / KCTC 32145 / OM5) (Oligotropha carboxidovorans)).